We begin with the raw amino-acid sequence, 341 residues long: GDT1-like protein 1, chloroplastic (341 aa).

A compositionally biased stretch (low complexity) spans 1 to 13 (MASVASSTVFASS). 2 disordered regions span residues 1-41 (MASV…GRSV) and 54-76 (VVTRASDEEGPPEPAGQGRGGGR). A chloroplast-targeting transit peptide spans 1–57 (MASVASSTVFASSLPHHRATTRAPPTPPRIPRRARLPGRSVVSCLPKRGSEKLVVTR). The next 7 helical transmembrane spans lie at 79–99 (PSLDASSCGLALAAAAGVLML), 117–137 (VVGDLGDISTGFASAFLLIFF), 158–178 (AIIFLGTFGALAVMTIISVVL), 203–223 (FLAACLLVYYGVTTLLDAASG), 246–266 (GAGIISAASTIASTFVLVFIA), 286–306 (LGVIAGSLAGHAVATLIAVLG), and 318–338 (IVAYIGGSLFLAFAAVTLVEI).

This sequence belongs to the GDT1 family.

It localises to the plastid. The protein resides in the chloroplast membrane. This is GDT1-like protein 1, chloroplastic from Oryza sativa subsp. indica (Rice).